The sequence spans 158 residues: MIKYPMTVQGARALEEELTHLTKVIRPKLSQDIGTARELGDLKENAEYHAAREQQGMVEARIRDIEGRMQNAVVIDVTTIAHTGKVIFGTTVEIANVETDESVVYQIVGEDEADIKKGKISVGSPIARALIAKEEGDVVVVKTPSGVIEYEIIEVRHI.

It belongs to the GreA/GreB family.

In terms of biological role, necessary for efficient RNA polymerase transcription elongation past template-encoded arresting sites. The arresting sites in DNA have the property of trapping a certain fraction of elongating RNA polymerases that pass through, resulting in locked ternary complexes. Cleavage of the nascent transcript by cleavage factors such as GreA or GreB allows the resumption of elongation from the new 3'terminus. GreA releases sequences of 2 to 3 nucleotides. The protein is Transcription elongation factor GreA of Pseudomonas syringae pv. tomato (strain ATCC BAA-871 / DC3000).